Reading from the N-terminus, the 1210-residue chain is DNA-directed RNA polymerase II subunit RPB2 (1210 aa).

Aspartate 826 serves as a coordination point for Mg(2+). Positions 1152, 1155, 1170, and 1173 each coordinate Zn(2+). The C4-type zinc-finger motif lies at 1152–1173 (CDICGLIAIASYKKDSYECRSC).

Belongs to the RNA polymerase beta chain family. As to quaternary structure, component of the RNA polymerase II (Pol II) complex consisting of 12 subunits.

Its subcellular location is the nucleus. It carries out the reaction RNA(n) + a ribonucleoside 5'-triphosphate = RNA(n+1) + diphosphate. Its function is as follows. DNA-dependent RNA polymerase catalyzes the transcription of DNA into RNA using the four ribonucleoside triphosphates as substrates. Second largest component of RNA polymerase II which synthesizes mRNA precursors and many functional non-coding RNAs. Proposed to contribute to the polymerase catalytic activity and forms the polymerase active center together with the largest subunit. Pol II is the central component of the basal RNA polymerase II transcription machinery. It is composed of mobile elements that move relative to each other. RPB2 is part of the core element with the central large cleft, the clamp element that moves to open and close the cleft and the jaws that are thought to grab the incoming DNA template. The polypeptide is DNA-directed RNA polymerase II subunit RPB2 (rpb2) (Schizosaccharomyces pombe (strain 972 / ATCC 24843) (Fission yeast)).